The chain runs to 59 residues: UPF0391 membrane protein lpp2589 (59 aa).

The next 2 helical transmembrane spans lie at A5–V25 and I30–L50.

Belongs to the UPF0391 family.

Its subcellular location is the cell membrane. This is UPF0391 membrane protein lpp2589 from Legionella pneumophila (strain Paris).